Reading from the N-terminus, the 153-residue chain is Putative nuclear shuttle protein (153 aa).

The protein belongs to the nanoviridae nuclear shuttle protein family.

It localises to the host nucleus. It is found in the host cytoplasm. Its function is as follows. Putative nuclear shuttle protein. This is Putative nuclear shuttle protein (DNA-N) from Trifolium subterraneum (Subterranean clover).